Consider the following 190-residue polypeptide: Pyridoxal 5'-phosphate synthase subunit PdxT (190 aa).

Residue 46–48 (GES) coordinates L-glutamine. Cys78 serves as the catalytic Nucleophile. Residues Arg108 and 137 to 138 (IR) each bind L-glutamine. Active-site charge relay system residues include His174 and Glu176.

This sequence belongs to the glutaminase PdxT/SNO family. As to quaternary structure, in the presence of PdxS, forms a dodecamer of heterodimers. Only shows activity in the heterodimer.

It catalyses the reaction aldehydo-D-ribose 5-phosphate + D-glyceraldehyde 3-phosphate + L-glutamine = pyridoxal 5'-phosphate + L-glutamate + phosphate + 3 H2O + H(+). The catalysed reaction is L-glutamine + H2O = L-glutamate + NH4(+). It participates in cofactor biosynthesis; pyridoxal 5'-phosphate biosynthesis. In terms of biological role, catalyzes the hydrolysis of glutamine to glutamate and ammonia as part of the biosynthesis of pyridoxal 5'-phosphate. The resulting ammonia molecule is channeled to the active site of PdxS. This Herpetosiphon aurantiacus (strain ATCC 23779 / DSM 785 / 114-95) protein is Pyridoxal 5'-phosphate synthase subunit PdxT.